The sequence spans 417 residues: Serine hydroxymethyltransferase (417 aa).

Residues leucine 121 and 125–127 (GHL) contribute to the (6S)-5,6,7,8-tetrahydrofolate site. N6-(pyridoxal phosphate)lysine is present on lysine 229. (6S)-5,6,7,8-tetrahydrofolate is bound at residue 354–356 (SPF).

The protein belongs to the SHMT family. Homodimer. The cofactor is pyridoxal 5'-phosphate.

The protein resides in the cytoplasm. The enzyme catalyses (6R)-5,10-methylene-5,6,7,8-tetrahydrofolate + glycine + H2O = (6S)-5,6,7,8-tetrahydrofolate + L-serine. It participates in one-carbon metabolism; tetrahydrofolate interconversion. Its pathway is amino-acid biosynthesis; glycine biosynthesis; glycine from L-serine: step 1/1. Functionally, catalyzes the reversible interconversion of serine and glycine with tetrahydrofolate (THF) serving as the one-carbon carrier. This reaction serves as the major source of one-carbon groups required for the biosynthesis of purines, thymidylate, methionine, and other important biomolecules. Also exhibits THF-independent aldolase activity toward beta-hydroxyamino acids, producing glycine and aldehydes, via a retro-aldol mechanism. The protein is Serine hydroxymethyltransferase of Azotobacter vinelandii (strain DJ / ATCC BAA-1303).